The sequence spans 125 residues: Holo-[acyl-carrier-protein] synthase (125 aa).

Mg(2+) is bound by residues Asp8 and Glu57.

This sequence belongs to the P-Pant transferase superfamily. AcpS family. Mg(2+) serves as cofactor.

The protein localises to the cytoplasm. The enzyme catalyses apo-[ACP] + CoA = holo-[ACP] + adenosine 3',5'-bisphosphate + H(+). Transfers the 4'-phosphopantetheine moiety from coenzyme A to a Ser of acyl-carrier-protein. The polypeptide is Holo-[acyl-carrier-protein] synthase (Neisseria gonorrhoeae (strain ATCC 700825 / FA 1090)).